A 288-amino-acid chain; its full sequence is 4-hydroxybenzoate octaprenyltransferase (288 aa).

The next 7 helical transmembrane spans lie at 38 to 58 (IAAQ…GVFL), 98 to 120 (ILFA…MTIW), 141 to 161 (LLQV…FSAV), 163 to 183 (ESLP…SVIY), 213 to 233 (LIIG…GSLA), 238 to 258 (VYYI…KLMV), and 268 to 288 (AFLN…LSYL).

The protein belongs to the UbiA prenyltransferase family. The cofactor is Mg(2+).

Its subcellular location is the cell inner membrane. It carries out the reaction all-trans-octaprenyl diphosphate + 4-hydroxybenzoate = 4-hydroxy-3-(all-trans-octaprenyl)benzoate + diphosphate. The protein operates within cofactor biosynthesis; ubiquinone biosynthesis. Functionally, catalyzes the prenylation of para-hydroxybenzoate (PHB) with an all-trans polyprenyl group. Mediates the second step in the final reaction sequence of ubiquinone-8 (UQ-8) biosynthesis, which is the condensation of the polyisoprenoid side chain with PHB, generating the first membrane-bound Q intermediate 3-octaprenyl-4-hydroxybenzoate. The chain is 4-hydroxybenzoate octaprenyltransferase from Providencia stuartii.